Consider the following 171-residue polypeptide: Peptide deformylase (171 aa).

The Fe cation site is built by Cys-91 and His-133. The active site involves Glu-134. Residue His-137 participates in Fe cation binding.

This sequence belongs to the polypeptide deformylase family. Requires Fe(2+) as cofactor.

It carries out the reaction N-terminal N-formyl-L-methionyl-[peptide] + H2O = N-terminal L-methionyl-[peptide] + formate. Functionally, removes the formyl group from the N-terminal Met of newly synthesized proteins. Requires at least a dipeptide for an efficient rate of reaction. N-terminal L-methionine is a prerequisite for activity but the enzyme has broad specificity at other positions. The polypeptide is Peptide deformylase (Sodalis glossinidius (strain morsitans)).